The following is a 757-amino-acid chain: Tyrosine-protein kinase HTK16 (757 aa).

One can recognise an SH2 1 domain in the interval 10–102 (WYHGKITREV…GLPCKLVDFC (93 aa)). ANK repeat units follow at residues 115-147 (GLDT…NVNA), 151-180 (SGLT…DASA), 184-214 (NGRT…DFLK), 219-248 (NGWV…SMYP), and 252-281 (DGDT…NQPK). The SH2 2 domain maps to 287 to 379 (WLHQNLDRNG…GLPTLLQFPV (93 aa)). 2 disordered regions span residues 381 to 407 (SAEN…PSRP) and 444 to 467 (PKLP…QKGD). The span at 455–467 (EVPNSVNVGQKGD) shows a compositional bias: polar residues. The 257-residue stretch at 484 to 740 (ISFGKELGVG…PTFNELHSTF (257 aa)) folds into the Protein kinase domain. Residues 490–498 (LGVGEFGSV) and Lys-516 each bind ATP. The Proton acceptor role is filled by Asp-608. At Tyr-746 the chain carries Phosphotyrosine.

Belongs to the protein kinase superfamily. Tyr protein kinase family. As to expression, epithelial cells.

The catalysed reaction is L-tyrosyl-[protein] + ATP = O-phospho-L-tyrosyl-[protein] + ADP + H(+). May be involved in signal transduction. The chain is Tyrosine-protein kinase HTK16 (HTK16) from Hydra vulgaris (Hydra).